The chain runs to 549 residues: Probable protein kinase UbiB (549 aa).

A Protein kinase domain is found at 123-501; that stretch reads DFNETPLASA…QQQAHKSNYL (379 aa). ATP-binding positions include 129-137 and lysine 152; that span reads LASASISQV. Residue aspartate 287 is the Proton acceptor of the active site. 2 consecutive transmembrane segments (helical) span residues 498-518 and 520-540; these read SNYLLITSAILLICGTLLFNQ and ATLLSPYVCLISGAVLWIIGW.

Belongs to the ABC1 family. UbiB subfamily.

It localises to the cell inner membrane. It participates in cofactor biosynthesis; ubiquinone biosynthesis [regulation]. Its function is as follows. Is probably a protein kinase regulator of UbiI activity which is involved in aerobic coenzyme Q (ubiquinone) biosynthesis. The chain is Probable protein kinase UbiB from Shewanella oneidensis (strain ATCC 700550 / JCM 31522 / CIP 106686 / LMG 19005 / NCIMB 14063 / MR-1).